Reading from the N-terminus, the 360-residue chain is MLYHLAMVLETFYSGFNVFQYITFRTILGVLTALGIALMIGPAVIQRLVLHQVGQQVRDDGPETHLEKAGTPTMGGALILVAIAVSTLLWADLTNRYVWVVLLVTLAFGLIGGVDDALKLARQDSQGLRARTKFSLQVLAALAASTFLFATATDPVETSLVLPLVKEWVFPLGLGFIALATLVIVGSSNAVNLTDGLDGLAIMPTVLVATGLAVFAYASGHHVFADYLGIPSVPGVGELVIFCGAIVGAGLGFLWYNTYPAQVFMGDVGALALGAALGVVAVAVRQEIVLFIMGGIFVMETVSVMIQVLSYKLTGRRVFRMAPLHHHYELKGWPEPRVIVRFWIITVVLVLIGLAMLKVR.

10 helical membrane passes run 26 to 46, 73 to 93, 98 to 118, 136 to 156, 168 to 188, 199 to 219, 235 to 255, 263 to 283, 288 to 308, and 338 to 358; these read TILG…AVIQ, TMGG…WADL, VWVV…DDAL, LQVL…TDPV, WVFP…VGSS, GLAI…AYAS, GVGE…GFLW, VFMG…VAVA, IVLF…MIQV, and VIVR…AMLK.

This sequence belongs to the glycosyltransferase 4 family. MraY subfamily. Requires Mg(2+) as cofactor.

It localises to the cell inner membrane. The catalysed reaction is UDP-N-acetyl-alpha-D-muramoyl-L-alanyl-gamma-D-glutamyl-meso-2,6-diaminopimeloyl-D-alanyl-D-alanine + di-trans,octa-cis-undecaprenyl phosphate = di-trans,octa-cis-undecaprenyl diphospho-N-acetyl-alpha-D-muramoyl-L-alanyl-D-glutamyl-meso-2,6-diaminopimeloyl-D-alanyl-D-alanine + UMP. It functions in the pathway cell wall biogenesis; peptidoglycan biosynthesis. Functionally, catalyzes the initial step of the lipid cycle reactions in the biosynthesis of the cell wall peptidoglycan: transfers peptidoglycan precursor phospho-MurNAc-pentapeptide from UDP-MurNAc-pentapeptide onto the lipid carrier undecaprenyl phosphate, yielding undecaprenyl-pyrophosphoryl-MurNAc-pentapeptide, known as lipid I. This is Phospho-N-acetylmuramoyl-pentapeptide-transferase from Halorhodospira halophila (strain DSM 244 / SL1) (Ectothiorhodospira halophila (strain DSM 244 / SL1)).